The following is a 127-amino-acid chain: MAKTNKKKRIRRNVSNGVAHVHATFNNTTVTITDAKGDTLCWASAGTSGFKGSRKSTPFAGQCAAQQAAEKATKFGMRDVEVRVKGPGSGRESAITALQAAGLNVKLIEEVTPIPHNGCRPRKKRRV.

This sequence belongs to the universal ribosomal protein uS11 family. As to quaternary structure, part of the 30S ribosomal subunit. Interacts with proteins S7 and S18. Binds to IF-3.

Located on the platform of the 30S subunit, it bridges several disparate RNA helices of the 16S rRNA. Forms part of the Shine-Dalgarno cleft in the 70S ribosome. The sequence is that of Small ribosomal subunit protein uS11 from Rhodopirellula baltica (strain DSM 10527 / NCIMB 13988 / SH1).